The sequence spans 1315 residues: Serine-aspartate repeat-containing protein D (1315 aa).

An N-terminal signal peptide occupies residues 1–35 (MLNRENKTAITRKGMVSNRLNKFSIRKYTVGTASI). Residues 23–34 (FSIRKYTVGTAS) carry the YSIRK-G/S signaling motif motif. A ligand binding A region region spans residues 36 to 568 (LVGTTLIFGL…NNQSGGAGQE (533 aa)). Residues 54–185 (ESTNKELNEA…NKKVDAKTES (132 aa)) are disordered. Composition is skewed to polar residues over residues 62–71 (EATTSASDNQ) and 94–108 (EMVSSQGNETTSNGN). Residues 130–145 (KSDEQASPKSTNEDLN) show a composition bias toward basic and acidic residues. Composition is skewed to polar residues over residues 146 to 155 (TKQTISNQEA) and 163 to 173 (NKSVVNVQPTN). Over residues 174 to 183 (EENKKVDAKT) the composition is skewed to basic and acidic residues. CNA-B domains follow at residues 569–680 (VYKI…IYKP), 681–791 (KYNL…YKTP), 792–901 (KYNL…FYKP), 902–1012 (TYNL…YKTP), and 1013–1123 (KYSL…EEET). 3 disordered regions span residues 857-883 (ETPSGYTPTQVGSGTDEGIDSNGTSTT), 972-992 (YTPTSVTSGNDTEKDSNGLTT), and 1078-1291 (EKPA…SNNA). 2 stretches are compositionally biased toward polar residues: residues 860 to 869 (SGYTPTQVGS) and 972 to 981 (YTPTSVTSGN). Composition is skewed to acidic residues over residues 1091–1101 (TEDDKDADGGE), 1118–1134 (YYEEETSDSDSDSDSDS), 1142–1164 (SDSDSDSDSDSDSDSDSDSDSDS), and 1172–1254 (SDSD…DSDS). The LPXTG sorting signal signature appears at 1278–1282 (LPETG). Thr-1281 is subject to Pentaglycyl murein peptidoglycan amidated threonine. Residues 1282 to 1315 (GNENSGSNNATLFGGLFAALGSLLLFGRRKKQNK) constitute a propeptide, removed by sortase.

It belongs to the serine-aspartate repeat-containing protein (SDr) family. As to quaternary structure, interacts with host DSG1; this interaction increases S.aureus adherence to keratinocytes. Anchored to the cell wall by sortase A.

It localises to the secreted. The protein localises to the cell wall. Its function is as follows. Cell surface-associated calcium-binding protein which plays an important role in adhesion and pathogenesis. Mediates interactions with components of the extracellular matrix such as host DSG1 to promote bacterial adhesion to host cells. Contributes to the resistance to killing by innate immune components such as neutrophils present in blood and thus attenuates bacterial clearance. The sequence is that of Serine-aspartate repeat-containing protein D (sdrD) from Staphylococcus aureus (strain Newman).